The primary structure comprises 441 residues: Xylose isomerase 1 (441 aa).

Catalysis depends on residues His-105 and Asp-108. Mg(2+) is bound by residues Glu-236, Glu-272, His-275, Asp-300, Asp-311, Asp-313, and Asp-343.

This sequence belongs to the xylose isomerase family. As to quaternary structure, homotetramer. Mg(2+) serves as cofactor.

The protein localises to the cytoplasm. The catalysed reaction is alpha-D-xylose = alpha-D-xylulofuranose. In Xanthomonas axonopodis pv. citri (strain 306), this protein is Xylose isomerase 1 (xylA1).